We begin with the raw amino-acid sequence, 705 residues long: Polyribonucleotide nucleotidyltransferase (705 aa).

Mg(2+) is bound by residues D487 and D493. The KH domain occupies 554-613 (PKILTMKINPDKIRDVIGPSGKQINKIIEDTGVKIDIEQDGTIFISSTEEDMNQKAKKII). The S1 motif domain maps to 623 to 691 (GQLYLGKVKR…KQGRVNLSRK (69 aa)).

It belongs to the polyribonucleotide nucleotidyltransferase family. The cofactor is Mg(2+).

Its subcellular location is the cytoplasm. The enzyme catalyses RNA(n+1) + phosphate = RNA(n) + a ribonucleoside 5'-diphosphate. Functionally, involved in mRNA degradation. Catalyzes the phosphorolysis of single-stranded polyribonucleotides processively in the 3'- to 5'-direction. The protein is Polyribonucleotide nucleotidyltransferase of Bacillus pumilus (strain SAFR-032).